A 122-amino-acid chain; its full sequence is Large ribosomal subunit protein uL18 (122 aa).

Positions 1 to 19 (MSKLSRKQQTQKRHKRLRR) are enriched in basic residues. Residues 1-27 (MSKLSRKQQTQKRHKRLRRNLSGTESR) are disordered.

The protein belongs to the universal ribosomal protein uL18 family. As to quaternary structure, part of the 50S ribosomal subunit; part of the 5S rRNA/L5/L18/L25 subcomplex. Contacts the 5S and 23S rRNAs.

Its function is as follows. This is one of the proteins that bind and probably mediate the attachment of the 5S RNA into the large ribosomal subunit, where it forms part of the central protuberance. The sequence is that of Large ribosomal subunit protein uL18 from Prochlorococcus marinus (strain NATL1A).